The following is a 132-amino-acid chain: Small ribosomal subunit protein uS8 (132 aa).

Belongs to the universal ribosomal protein uS8 family. As to quaternary structure, part of the 30S ribosomal subunit. Contacts proteins S5 and S12.

Its function is as follows. One of the primary rRNA binding proteins, it binds directly to 16S rRNA central domain where it helps coordinate assembly of the platform of the 30S subunit. This is Small ribosomal subunit protein uS8 from Gluconobacter oxydans (strain 621H) (Gluconobacter suboxydans).